Consider the following 244-residue polypeptide: MARWRRRLGVAALGAAMLASLAPAARASLVITGTRVIYNAGSPETTVKMSNEGQAPALMQAWIDDGNAEAKPDEVQVPFFLTPPLARVDPGKGQTLRIFFNGYPDGKTLPSDRESVFWLNVLEVPPKATPEEGHGVLQLTIRSRLKLFYRPKGLSGNPLTAAADLTFKRKPNGVLEVHNPTPYYVNLQKLEVGENGAHGSKTPWMLAPLSSDELRLKGTGAKSVQYWAIDDFGGVTPYQAAIAD.

The first 24 residues, M1–A24, serve as a signal peptide directing secretion.

This sequence belongs to the periplasmic pilus chaperone family.

It is found in the periplasm. Functionally, required for the biogenesis of the filamentous hemagglutinin and the fimbria. The sequence is that of Chaperone protein FimB/FhaD (fimB) from Bordetella pertussis (strain Tohama I / ATCC BAA-589 / NCTC 13251).